Reading from the N-terminus, the 557-residue chain is MQPVLFRTLSLGVAIAAASSSAFAATLDGGAVAAPDEYGAKVAAQILKAGGNAVDAAVATAFTLAVTYPEAGNIGGGGFMTLYMDGKPYFLDYREVAPKAASKTMYLDDKGEVIENLSLVGAKAAGVPGTVMGLWEAHKRFGKLPWSELLTPAIGYAQKGFKVADKQFQYRQDAVALFNGKTNFGDYFGHMKAGEAFLQPDLAKTLERIADKGPDEFYKGHTADLLVAQMQQDKGLITHQDLADYKVRWREPMRVDWQGNTLYTAPLPSSGGIALAQLLGIKENRAADFKGVELNSARYIHLLAEIEKRVFADRADYLGDPDFSKVPVARLTDPAYLKQRAAEVNPTAISPTEKVRPGLEPHQTTHFSIVDADGNAVSNTYTLNWDFGSGVVVKGAGFLLNDEMDDFSAKPGVANAFGVVGSDANAIEPGKRMLSSMSPSIVTRDGKVSLVVGTPGGSRIFTSIFQVLNNIYDFHLPLEKAVAAQRVHHQLLPKDTIYYDAYAPLAGKVAEELKAMGYTLEDQGWNMGDIQAIRVDGKALETASDPRGRGVGLVVKP.

The N-terminal stretch at 1 to 24 (MQPVLFRTLSLGVAIAAASSSAFA) is a signal peptide. L-glutamate is bound at residue Arg94. Thr364 acts as the Nucleophile in catalysis. L-glutamate is bound by residues Thr382, Asn384, Glu403, Asp406, 435–436 (SS), and 456–457 (GG).

It belongs to the gamma-glutamyltransferase family. As to quaternary structure, this enzyme consists of two polypeptide chains, which are synthesized in precursor form from a single polypeptide. In terms of processing, cleaved by autocatalysis into a large and a small subunit.

The protein resides in the periplasm. It catalyses the reaction an N-terminal (5-L-glutamyl)-[peptide] + an alpha-amino acid = 5-L-glutamyl amino acid + an N-terminal L-alpha-aminoacyl-[peptide]. It carries out the reaction glutathione + H2O = L-cysteinylglycine + L-glutamate. The enzyme catalyses an S-substituted glutathione + H2O = an S-substituted L-cysteinylglycine + L-glutamate. Its pathway is sulfur metabolism; glutathione metabolism. The sequence is that of Glutathione hydrolase proenzyme (ggt) from Pseudomonas aeruginosa (strain ATCC 15692 / DSM 22644 / CIP 104116 / JCM 14847 / LMG 12228 / 1C / PRS 101 / PAO1).